Here is a 215-residue protein sequence, read N- to C-terminus: Large ribosomal subunit protein uL3 (215 aa).

A disordered region spans residues 136-155 (GVSISHRSHGSTGQRQDPGK). Q151 is modified (N5-methylglutamine).

Belongs to the universal ribosomal protein uL3 family. As to quaternary structure, part of the 50S ribosomal subunit. Forms a cluster with proteins L14 and L19. In terms of processing, methylated by PrmB.

In terms of biological role, one of the primary rRNA binding proteins, it binds directly near the 3'-end of the 23S rRNA, where it nucleates assembly of the 50S subunit. The sequence is that of Large ribosomal subunit protein uL3 from Rickettsia rickettsii (strain Iowa).